Reading from the N-terminus, the 138-residue chain is Large ribosomal subunit protein uL16 (138 aa).

Residues 1-13 (MLQPARRKFRKEQ) are compositionally biased toward basic residues. The interval 1-22 (MLQPARRKFRKEQKGRNTGVAT) is disordered.

It belongs to the universal ribosomal protein uL16 family. As to quaternary structure, part of the 50S ribosomal subunit.

Functionally, binds 23S rRNA and is also seen to make contacts with the A and possibly P site tRNAs. This Acidovorax ebreus (strain TPSY) (Diaphorobacter sp. (strain TPSY)) protein is Large ribosomal subunit protein uL16.